Here is a 685-residue protein sequence, read N- to C-terminus: Iron(3+)-hydroxamate import system permease protein FhuB (685 aa).

The next 18 membrane-spanning stretches (helical) occupy residues 35–55 (ALLL…NFSV), 87–107 (LAIS…FQQV), 120–140 (VATG…PGAL), 143–163 (QFAA…VAWG), 172–192 (ILAG…LVIF), 222–242 (QLLG…LMGL), 265–285 (AIVL…IGLF), 302–322 (LMLA…IILW), 328–348 (MEVS…LWLL), 373–393 (LAFA…ALSF), 416–436 (WPRI…GCII), 456–476 (AAFG…GWLL), 479–499 (GSLG…RGGF), 504–524 (MLLA…MLQA), 553–573 (AIVM…LTIL), 592–612 (IALL…IGPL), 632–652 (MPHM…ADWC), and 660–680 (YQIP…IYLL).

Belongs to the binding-protein-dependent transport system permease family. FecCD subfamily. The complex is composed of two ATP-binding proteins (FhuC), a transmembrane protein (FhuB) and a solute-binding protein (FhuD).

The protein localises to the cell inner membrane. Part of the ABC transporter complex FhuCDB involved in iron(3+)-hydroxamate import. Responsible for the translocation of the substrate across the membrane. Involved in ferrioxamine-mediated iron(III) utilization. In Salmonella typhimurium (strain LT2 / SGSC1412 / ATCC 700720), this protein is Iron(3+)-hydroxamate import system permease protein FhuB (fhuB).